We begin with the raw amino-acid sequence, 237 residues long: uncharacterized protein (237 aa).

Positions 4 to 237 (QFLIAHRGYS…VKFQIAAQLY (234 aa)) constitute a GP-PDE domain.

The protein to glycerophosphoryl diester phosphodiesterases (EC 3.1.4.46). It to M.genitalium MG293.

This is an uncharacterized protein from Mycoplasma pneumoniae (strain ATCC 29342 / M129 / Subtype 1) (Mycoplasmoides pneumoniae).